We begin with the raw amino-acid sequence, 97 residues long: Cornifin (97 aa).

Residues 1 to 42 (MSSQQQKQPCTPPPQPQQQQVKQPCQPPPQEPCVPKTKEPCH) form a disordered region. S2 is subject to N-acetylserine. 9 tandem repeats follow at residues 3–14 (SQQQKQPCTPPP), 18–29 (QQQVKQPCQPPP), 31–38 (EPCVPKTK), 39–46 (EPCHPKVP), 47–54 (EPCQPKVP), 55–62 (EPCQPKVP), 63–70 (EPCHPKVP), 71–78 (EPCQPKVP), and 79–85 (EPCPSPV). Residues 3 to 29 (SQQQKQPCTPPPQPQQQQVKQPCQPPP) are 2 X 12 AA approximate repeats. Residues 31 to 85 (EPCVPKTKEPCHPKVPEPCQPKVPEPCQPKVPEPCHPKVPEPCQPKVPEPCPSPV) form a 7 X 8 AA approximate tandem repeats region.

The protein belongs to the cornifin (SPRR) family. Not detected in normal lung tissue but seen in tumor tissues. Cells around the keratin pearls contain high levels.

It localises to the cytoplasm. In terms of biological role, cross-linked envelope protein of keratinocytes. It is a keratinocyte protein that first appears in the cell cytosol, but ultimately becomes cross-linked to membrane proteins by transglutaminase. All that results in the formation of an insoluble envelope beneath the plasma membrane. The polypeptide is Cornifin (SPRP) (Sus scrofa (Pig)).